The sequence spans 336 residues: Fructose-1,6-bisphosphatase class 1 (336 aa).

Residues Glu90, Asp112, Leu114, and Asp115 each contribute to the Mg(2+) site. Residues 115-118 (DGSS), Asn211, and Lys277 contribute to the substrate site. Glu283 contacts Mg(2+).

It belongs to the FBPase class 1 family. As to quaternary structure, homotetramer. It depends on Mg(2+) as a cofactor.

The protein localises to the cytoplasm. The enzyme catalyses beta-D-fructose 1,6-bisphosphate + H2O = beta-D-fructose 6-phosphate + phosphate. The protein operates within carbohydrate biosynthesis; gluconeogenesis. In Pseudomonas aeruginosa (strain UCBPP-PA14), this protein is Fructose-1,6-bisphosphatase class 1.